The following is a 60-amino-acid chain: Large ribosomal subunit protein uL30 (60 aa).

This sequence belongs to the universal ribosomal protein uL30 family. In terms of assembly, part of the 50S ribosomal subunit.

In Pediococcus pentosaceus (strain ATCC 25745 / CCUG 21536 / LMG 10740 / 183-1w), this protein is Large ribosomal subunit protein uL30.